Consider the following 331-residue polypeptide: Adenosine deaminase (331 aa).

Positions 12 and 14 each coordinate Zn(2+). Residues histidine 14, aspartate 16, and glycine 170 each contribute to the substrate site. Histidine 197 contributes to the Zn(2+) binding site. The active-site Proton donor is glutamate 200. Aspartate 278 provides a ligand contact to Zn(2+). Aspartate 279 contributes to the substrate binding site.

This sequence belongs to the metallo-dependent hydrolases superfamily. Adenosine and AMP deaminases family. Adenosine deaminase subfamily. It depends on Zn(2+) as a cofactor.

It catalyses the reaction adenosine + H2O + H(+) = inosine + NH4(+). The catalysed reaction is 2'-deoxyadenosine + H2O + H(+) = 2'-deoxyinosine + NH4(+). Catalyzes the hydrolytic deamination of adenosine and 2-deoxyadenosine. In Shewanella sp. (strain MR-7), this protein is Adenosine deaminase.